The following is a 627-amino-acid chain: (-)-beta-pinene synthase 2, chloroplastic (627 aa).

The N-terminal 51 residues, 1-51 (MDLISVLPSASKSCVCLHKPLSSSTHKLKPFCRKIRILGMPRPRKSVLMVS), are a transit peptide targeting the chloroplast. Aspartate 378, aspartate 382, and aspartate 530 together coordinate Mg(2+). A DDXXD motif motif is present at residues 378–382 (DDMYD).

Belongs to the terpene synthase family. Tpsd subfamily. It depends on Mg(2+) as a cofactor. Mn(2+) is required as a cofactor.

It localises to the plastid. The protein localises to the chloroplast. The catalysed reaction is (2E)-geranyl diphosphate = (1S,5S)-beta-pinene + diphosphate. It catalyses the reaction (2E)-geranyl diphosphate = (1S,5S)-alpha-pinene + diphosphate. The protein operates within terpene metabolism; oleoresin biosynthesis. Its pathway is secondary metabolite biosynthesis; terpenoid biosynthesis. Functionally, monoterpene synthase (TPS) involved in the biosynthesis of monoterpene natural products included in conifer oleoresin secretions and volatile emissions; these compounds contribute to biotic and abiotic stress defense against herbivores and pathogens. Catalyzes the conversion of (2E)-geranyl diphosphate (GPP) to (-)-beta-pinene and, to a lower extent, to (-)-alpha-pinene. This is (-)-beta-pinene synthase 2, chloroplastic from Pinus banksiana (Jack pine).